The sequence spans 289 residues: G1/S-specific cyclin-D2 (289 aa).

A Cyclin N-terminal domain is found at 26–151; it reads VLQNLLTIEE…VVLGKLKWNL (126 aa). The interval 264–289 is disordered; it reads DQGDGSKSEDELDQASTPTDVRDIDL. The residue at position 271 (Ser-271) is a Phosphoserine. Thr-280 bears the Phosphothreonine mark.

This sequence belongs to the cyclin family. Cyclin D subfamily. In terms of assembly, interacts with either CDK4 or CDK6 protein kinase to form a serine/threonine kinase holoenzyme complex. The cyclin subunit imparts substrate specificity to the complex. In terms of processing, phosphorylation at Thr-280 by MAP kinases is required for ubiquitination and degradation by the DCX(AMBRA1) complex. Ubiquitinated by the DCX(AMBRA1) complex during the transition from G1 to S cell phase, leading to its degradation: ubiquitination is dependent on Thr-280 phosphorylation. The DCX(AMBRA1) complex represents the major regulator of CCND2 stability during the G1/S transition. Polyubiquitinated by the SCF(FBXL2) complex, leading to proteasomal degradation.

It is found in the nucleus. The protein localises to the cytoplasm. The protein resides in the nucleus membrane. Functionally, regulatory component of the cyclin D2-CDK4 (DC) complex that phosphorylates and inhibits members of the retinoblastoma (RB) protein family including RB1 and regulates the cell-cycle during G(1)/S transition. Phosphorylation of RB1 allows dissociation of the transcription factor E2F from the RB/E2F complex and the subsequent transcription of E2F target genes which are responsible for the progression through the G(1) phase. Hypophosphorylates RB1 in early G(1) phase. Cyclin D-CDK4 complexes are major integrators of various mitogenenic and antimitogenic signals. This chain is G1/S-specific cyclin-D2 (CCND2), found in Bos taurus (Bovine).